A 469-amino-acid chain; its full sequence is UDP-N-acetylmuramate--L-alanine ligase (469 aa).

An ATP-binding site is contributed by G119–T125.

Belongs to the MurCDEF family.

The protein resides in the cytoplasm. It carries out the reaction UDP-N-acetyl-alpha-D-muramate + L-alanine + ATP = UDP-N-acetyl-alpha-D-muramoyl-L-alanine + ADP + phosphate + H(+). It participates in cell wall biogenesis; peptidoglycan biosynthesis. Cell wall formation. This Vesicomyosocius okutanii subsp. Calyptogena okutanii (strain HA) protein is UDP-N-acetylmuramate--L-alanine ligase.